Here is a 120-residue protein sequence, read N- to C-terminus: MRLPAQLLGLLMLWVSGSSGDIVMTQSPLSLPVTPGEPASISCRSSQSLLHSNGYNYLDWYLQKPGQSPQLLIYLGSNRASGVPDRFSGSGSGTDFTLKISRVEAEDVGVYYCMQALQTP.

A signal peptide spans 1–19 (MRLPAQLLGLLMLWVSGSS). The Ig-like domain maps to 20 to 120 (GDIVMTQSPL…YYCMQALQTP (101 aa)). Residues 21–43 (DIVMTQSPLSLPVTPGEPASISC) are framework-1. A disulfide bond links C43 and C113. The tract at residues 44-59 (RSSQSLLHSNGYNYLD) is complementarity-determining-1. Residues 60–74 (WYLQKPGQSPQLLIY) form a framework-2 region. The complementarity-determining-2 stretch occupies residues 75 to 81 (LGSNRAS). The segment at 82–113 (GVPDRFSGSGSGTDFTLKISRVEAEDVGVYYC) is framework-3. The segment at 114-120 (MQALQTP) is complementarity-determining-3.

As to quaternary structure, immunoglobulins are composed of two identical heavy chains and two identical light chains; disulfide-linked.

The protein localises to the secreted. Its subcellular location is the cell membrane. Its function is as follows. V region of the variable domain of immunoglobulin light chains that participates in the antigen recognition. Immunoglobulins, also known as antibodies, are membrane-bound or secreted glycoproteins produced by B lymphocytes. In the recognition phase of humoral immunity, the membrane-bound immunoglobulins serve as receptors which, upon binding of a specific antigen, trigger the clonal expansion and differentiation of B lymphocytes into immunoglobulins-secreting plasma cells. Secreted immunoglobulins mediate the effector phase of humoral immunity, which results in the elimination of bound antigens. The antigen binding site is formed by the variable domain of one heavy chain, together with that of its associated light chain. Thus, each immunoglobulin has two antigen binding sites with remarkable affinity for a particular antigen. The variable domains are assembled by a process called V-(D)-J rearrangement and can then be subjected to somatic hypermutations which, after exposure to antigen and selection, allow affinity maturation for a particular antigen. The chain is Immunoglobulin kappa variable 2D-28 from Homo sapiens (Human).